The chain runs to 273 residues: NADPH-dependent 7-cyano-7-deazaguanine reductase (273 aa).

Val-81–Ser-83 serves as a coordination point for substrate. Ser-83–Lys-84 is an NADPH binding site. The active-site Thioimide intermediate is the Cys-179. Asp-186 (proton donor) is an active-site residue. Ala-218–Glu-219 provides a ligand contact to substrate. Arg-247 to Gly-248 lines the NADPH pocket.

Belongs to the GTP cyclohydrolase I family. QueF type 2 subfamily. Homodimer.

It is found in the cytoplasm. It catalyses the reaction 7-aminomethyl-7-carbaguanine + 2 NADP(+) = 7-cyano-7-deazaguanine + 2 NADPH + 3 H(+). The protein operates within tRNA modification; tRNA-queuosine biosynthesis. Catalyzes the NADPH-dependent reduction of 7-cyano-7-deazaguanine (preQ0) to 7-aminomethyl-7-deazaguanine (preQ1). The chain is NADPH-dependent 7-cyano-7-deazaguanine reductase from Rickettsia akari (strain Hartford).